Here is a 293-residue protein sequence, read N- to C-terminus: Large ribosomal RNA subunit accumulation protein YCED homolog 1, chloroplastic (293 aa).

A chloroplast-targeting transit peptide spans 1-42; that stretch reads MYYPQPTVSLAAAVALLRPSLRRHSQRASSLLRSSTPPPWVS.

The protein belongs to the DUF177 domain family. As to expression, highly expressed in shoots and leaves. Detected in roots, embryos and endosperm.

It localises to the plastid. It is found in the chloroplast. In terms of biological role, plays a role in synthesis, processing and/or stability of 23S rRNA. Required for embryogenesis. May be involved in RPL23 transcript levels regulation in non-photosynthetic plastids. This Zea mays (Maize) protein is Large ribosomal RNA subunit accumulation protein YCED homolog 1, chloroplastic.